The sequence spans 130 residues: Transcription antitermination protein NusB (130 aa).

Belongs to the NusB family.

Involved in transcription antitermination. Required for transcription of ribosomal RNA (rRNA) genes. Binds specifically to the boxA antiterminator sequence of the ribosomal RNA (rrn) operons. The sequence is that of Transcription antitermination protein NusB from Macrococcus caseolyticus (strain JCSC5402) (Macrococcoides caseolyticum).